Here is a 220-residue protein sequence, read N- to C-terminus: Fructose-6-phosphate aldolase 1 (220 aa).

Residue lysine 85 is the Schiff-base intermediate with substrate of the active site.

Belongs to the transaldolase family. Type 3A subfamily. In terms of assembly, homodecamer.

The protein resides in the cytoplasm. The enzyme catalyses beta-D-fructose 6-phosphate = dihydroxyacetone + D-glyceraldehyde 3-phosphate. In terms of biological role, catalyzes the reversible formation of fructose 6-phosphate from dihydroxyacetone and D-glyceraldehyde 3-phosphate via an aldolization reaction. This is Fructose-6-phosphate aldolase 1 (fsaA) from Escherichia coli O6:H1 (strain CFT073 / ATCC 700928 / UPEC).